The chain runs to 353 residues: S-adenosylmethionine:tRNA ribosyltransferase-isomerase (353 aa).

Belongs to the QueA family. As to quaternary structure, monomer.

It localises to the cytoplasm. The catalysed reaction is 7-aminomethyl-7-carbaguanosine(34) in tRNA + S-adenosyl-L-methionine = epoxyqueuosine(34) in tRNA + adenine + L-methionine + 2 H(+). It participates in tRNA modification; tRNA-queuosine biosynthesis. Transfers and isomerizes the ribose moiety from AdoMet to the 7-aminomethyl group of 7-deazaguanine (preQ1-tRNA) to give epoxyqueuosine (oQ-tRNA). This Sodalis glossinidius (strain morsitans) protein is S-adenosylmethionine:tRNA ribosyltransferase-isomerase.